Reading from the N-terminus, the 314-residue chain is Malate dehydrogenase (314 aa).

NAD(+) is bound by residues 11–16 (GSGNIG) and Asp-35. The substrate site is built by Arg-84 and Arg-90. NAD(+)-binding positions include Asn-97 and 120–122 (ITN). Asn-122 and Arg-153 together coordinate substrate. His-177 functions as the Proton acceptor in the catalytic mechanism.

It belongs to the LDH/MDH superfamily. MDH type 3 family.

It carries out the reaction (S)-malate + NAD(+) = oxaloacetate + NADH + H(+). Catalyzes the reversible oxidation of malate to oxaloacetate. This chain is Malate dehydrogenase, found in Rickettsia conorii (strain ATCC VR-613 / Malish 7).